Consider the following 313-residue polypeptide: Ribosomal RNA small subunit methyltransferase H (313 aa).

S-adenosyl-L-methionine-binding positions include G35–H37, D55, F80, D102, and Q109.

This sequence belongs to the methyltransferase superfamily. RsmH family.

It is found in the cytoplasm. It catalyses the reaction cytidine(1402) in 16S rRNA + S-adenosyl-L-methionine = N(4)-methylcytidine(1402) in 16S rRNA + S-adenosyl-L-homocysteine + H(+). In terms of biological role, specifically methylates the N4 position of cytidine in position 1402 (C1402) of 16S rRNA. The sequence is that of Ribosomal RNA small subunit methyltransferase H from Shewanella violacea (strain JCM 10179 / CIP 106290 / LMG 19151 / DSS12).